The chain runs to 253 residues: MTNTQVTLVQIDNYGPWTVTPEPRREVDLQTLQSRLYADLSQLIGNRMGYVFFTRFDNMVAVTNGLDADAHALIQESVGNRYPVTVSLSIGVDSSPAAALGTATDQLQDAGSAQDKGRTEILRGDPIQPSERTDTDVQIAHFDVNDATGKYTDQLNEFDSFINIEQGYAELMRYMRHENDSLSFFVGGDNIIAVCDGIDEAAYLDAIEHVNETVGVELKVGVGLDRTAQAAGMAAKHALETCREENTDVEFAR.

It belongs to the archaeal-type GTP cyclohydrolase family.

It carries out the reaction GTP + 3 H2O = 2-amino-5-formylamino-6-(5-phospho-D-ribosylamino)pyrimidin-4(3H)-one + 2 phosphate + 2 H(+). Its function is as follows. Catalyzes the formation of 2-amino-5-formylamino-6-ribofuranosylamino-4(3H)-pyrimidinone ribonucleotide monophosphate and inorganic phosphate from GTP. Also has an independent pyrophosphate phosphohydrolase activity. This chain is GTP cyclohydrolase III, found in Natronomonas pharaonis (strain ATCC 35678 / DSM 2160 / CIP 103997 / JCM 8858 / NBRC 14720 / NCIMB 2260 / Gabara) (Halobacterium pharaonis).